A 646-amino-acid polypeptide reads, in one-letter code: Elongation factor 4 (646 aa).

The region spanning 42 to 227 (AQIRNFCIIA…EVVRRVPHPQ (186 aa)) is the tr-type G domain. GTP-binding positions include 54 to 59 (DHGKST) and 174 to 177 (NKID).

Belongs to the TRAFAC class translation factor GTPase superfamily. Classic translation factor GTPase family. LepA subfamily.

It localises to the cell membrane. It catalyses the reaction GTP + H2O = GDP + phosphate + H(+). Required for accurate and efficient protein synthesis under certain stress conditions. May act as a fidelity factor of the translation reaction, by catalyzing a one-codon backward translocation of tRNAs on improperly translocated ribosomes. Back-translocation proceeds from a post-translocation (POST) complex to a pre-translocation (PRE) complex, thus giving elongation factor G a second chance to translocate the tRNAs correctly. Binds to ribosomes in a GTP-dependent manner. This chain is Elongation factor 4, found in Mycobacterium leprae (strain Br4923).